The sequence spans 282 residues: NADPH-dependent 7-cyano-7-deazaguanine reductase (282 aa).

Position 88–90 (88–90 (IES)) interacts with substrate. Residue 90–91 (SK) coordinates NADPH. Cysteine 190 acts as the Thioimide intermediate in catalysis. Aspartate 197 acts as the Proton donor in catalysis. Substrate is bound at residue 229–230 (HE). NADPH is bound at residue 258 to 259 (RG).

It belongs to the GTP cyclohydrolase I family. QueF type 2 subfamily. As to quaternary structure, homodimer.

The protein localises to the cytoplasm. The catalysed reaction is 7-aminomethyl-7-carbaguanine + 2 NADP(+) = 7-cyano-7-deazaguanine + 2 NADPH + 3 H(+). The protein operates within tRNA modification; tRNA-queuosine biosynthesis. In terms of biological role, catalyzes the NADPH-dependent reduction of 7-cyano-7-deazaguanine (preQ0) to 7-aminomethyl-7-deazaguanine (preQ1). The chain is NADPH-dependent 7-cyano-7-deazaguanine reductase from Escherichia coli (strain UTI89 / UPEC).